The following is a 1544-amino-acid chain: Transcriptional activator GLI3 (1544 aa).

2 stretches are compositionally biased toward polar residues: residues 1–10 (MEAQSHSSTT) and 402–429 (NPVQVSSGPSESTQHNKPTSESAVSSTG). Disordered stretches follow at residues 1–83 (MEAQ…EERA) and 373–477 (SAFG…QEPE). A compositionally biased stretch (basic and acidic residues) spans 463-476 (VKEEGDKDESKQEP). Residues 482 to 509 (TNCHWEGCSREFDTQEQLVHHINNDHIH) form a C2H2-type 1 zinc finger. A C2H2-type 2; degenerate zinc finger spans residues 520–542 (LDCSREQKPFKAQYMLVVHMRRH). C2H2-type zinc fingers lie at residues 548–572 (HKCTFEGCTKAYSRLENLKTHLRSH), 578–603 (YVCEHEGCNKAFSNASDRAKHQNRTH), and 609–634 (YVCKIPGCTKRYTDPSSLRKHVKTVH). Disordered regions lie at residues 622–728 (DPSS…YSNN), 865–919 (RSSG…DLPS), 1126–1155 (SVVLGNNNPSSFDRAPPASSQPAGSEVSKS), and 1327–1368 (HYQG…GNQS). A compositionally biased stretch (basic and acidic residues) spans 634–650 (HGPEAHVTKKQRGDIHP). Residues 660–685 (SHSQTRSPGQQTQGATGEQKDLNSTT) are compositionally biased toward polar residues. Residues 686–701 (SRREECLQVKAVKSEK) are compositionally biased toward basic and acidic residues. The segment covering 702 to 728 (PMTSQPSPGGQSTCSSEQSPISNYSNN) has biased composition (polar residues). Residues 865–882 (RSSGISPCFSSRRSSDAS) show a composition bias toward low complexity. Polar residues predominate over residues 1330-1355 (GVNQSSPMTLGQVSPTSQSSLHQGPQ).

This sequence belongs to the GLI C2H2-type zinc-finger protein family. Phosphorylation is essential for its proteolytic processing. Post-translationally, the repressor form (GLI3R), a C-terminally truncated form is generated from the full-length GLI3 protein (GLI3FL) through proteolytic processing.

Its subcellular location is the nucleus. The protein resides in the cytoplasm. Functionally, has a dual function as a transcriptional activator and a repressor of the sonic hedgehog (Shh) pathway, and plays a role in limb development. The full-length GLI3 form (GLI3FL) acts as an activator (GLI3A) while GLI3R, its C-terminally truncated form, acts as a repressor. The protein is Transcriptional activator GLI3 (GLI3) of Gallus gallus (Chicken).